A 195-amino-acid polypeptide reads, in one-letter code: Translation machinery-associated protein 22 (195 aa).

The SUI1 domain occupies valine 94–leucine 165. The segment at glutamate 176–alanine 195 is disordered.

Belongs to the DENR family. As to quaternary structure, interacts with the 40S ribosomal subunit.

It is found in the cytoplasm. This Scheffersomyces stipitis (strain ATCC 58785 / CBS 6054 / NBRC 10063 / NRRL Y-11545) (Yeast) protein is Translation machinery-associated protein 22 (TMA22).